We begin with the raw amino-acid sequence, 94 residues long: DNA-directed RNA polymerase subunit Rpo11 (94 aa).

The protein belongs to the archaeal Rpo11/eukaryotic RPB11/RPC19 RNA polymerase subunit family. In terms of assembly, part of the RNA polymerase complex.

Its subcellular location is the cytoplasm. It catalyses the reaction RNA(n) + a ribonucleoside 5'-triphosphate = RNA(n+1) + diphosphate. Its function is as follows. DNA-dependent RNA polymerase (RNAP) catalyzes the transcription of DNA into RNA using the four ribonucleoside triphosphates as substrates. The protein is DNA-directed RNA polymerase subunit Rpo11 of Natronomonas pharaonis (strain ATCC 35678 / DSM 2160 / CIP 103997 / JCM 8858 / NBRC 14720 / NCIMB 2260 / Gabara) (Halobacterium pharaonis).